The following is a 267-amino-acid chain: NAD kinase (267 aa).

The active-site Proton acceptor is the D45. NAD(+) is bound by residues 45-46 (DG), 121-122 (NE), K147, D149, 160-165 (TAYSKS), and A184.

Belongs to the NAD kinase family. A divalent metal cation serves as cofactor.

The protein localises to the cytoplasm. It catalyses the reaction NAD(+) + ATP = ADP + NADP(+) + H(+). Its function is as follows. Involved in the regulation of the intracellular balance of NAD and NADP, and is a key enzyme in the biosynthesis of NADP. Catalyzes specifically the phosphorylation on 2'-hydroxyl of the adenosine moiety of NAD to yield NADP. The chain is NAD kinase from Lactobacillus gasseri (strain ATCC 33323 / DSM 20243 / BCRC 14619 / CIP 102991 / JCM 1131 / KCTC 3163 / NCIMB 11718 / NCTC 13722 / AM63).